Reading from the N-terminus, the 414-residue chain is Tetraspanning orphan receptor (414 aa).

Residues 1–28 (MPRASALLTSDPRHQFTCCLCLHVRTGT) lie on the Cytoplasmic side of the membrane. The helical transmembrane segment at 29-49 (IIFGITQIIIQLIFISFLFLM) threads the bilayer. The Extracellular portion of the chain corresponds to 50–166 (TFNPRLFPED…EIKIRQFSPY (117 aa)). The chain crosses the membrane as a helical span at residues 167–187 (IAVCVTTFSLAFCCFMVHGAI). Over 188–194 (TRQPTHL) the chain is Cytoplasmic. Residues 195–215 (LPFFFIQVFDLIICLIHILGF) form a helical membrane-spanning segment. Residues 216 to 241 (MSSTSDIRLMIHTKTGPIYIKSTGLA) are Extracellular-facing. Residues 242–262 (FIILSISCMMLAFKAYCLGMV) traverse the membrane as a helical segment. At 263–414 (WDCYKYLMLN…TSTPSNVHPC (152 aa)) the chain is on the cytoplasmic side. The tract at residues 306–328 (LTGNLDSANESNTRAHPDPVTYD) is disordered.

As to quaternary structure, interacts (via N-terminal extracellular domain) with human C2a. Post-translationally, phosphorylated on tyrosine residues.

Its subcellular location is the cell membrane. Functionally, cell surface receptor that binds to human complement C2a protein. This results in inhibition of the classical and lectin pathways of complement activation, probably due to interference with binding of C2a to C4b and interference with cleavage by C1 or MASP2 such that C3 convertase cannot be formed. This infers resistance to complement-mediated cell lysis, allowing parasite survival and infection. In Schistosoma japonicum (Blood fluke), this protein is Tetraspanning orphan receptor.